The sequence spans 225 residues: Ras-related protein Rab-32 (225 aa).

Position 2 is an N-acetylalanine (A2). V36, G37, K38, T39, S40, S51, Q52, Y54, and T57 together coordinate GTP. T39 is a binding site for Mg(2+). The Switch 1 signature appears at 48–62 (QLFSQHYRATIGVDF). Position 57 (T57) interacts with Mg(2+). Position 71 is a phosphoserine (S71). Residue D81 participates in Mg(2+) binding. GTP-binding residues include G84, N143, K144, D146, A175, and K176. The Switch 2 motif lies at 84–97 (GQERFGNMTRVYYK). The segment at 178 to 197 (NINIEEAARFLVEKILVNHQ) is PKA-RII subunit binding domain. 2 S-geranylgeranyl cysteine lipidation sites follow: C224 and C225.

It belongs to the small GTPase superfamily. Rab family. In terms of assembly, interacts with ANKRD27. A decreased interaction with ANKRD27 seen in the presence of SGSM2. Interacts with LRRK2 (via N-terminus); this interaction results in stimulation of RAB10 phosphorylation by LRRK2. Requires Mg(2+) as cofactor. Widely expressed with high levels in heart, liver, kidney, bone marrow, testis, colon and fetal lung.

The protein localises to the mitochondrion. The protein resides in the mitochondrion outer membrane. It is found in the cytoplasmic vesicle. Its subcellular location is the phagosome. It localises to the phagosome membrane. The protein localises to the melanosome. The protein resides in the melanosome membrane. It catalyses the reaction GTP + H2O = GDP + phosphate + H(+). Its activity is regulated as follows. Regulated by guanine the nucleotide exchange factor (GEF) BLOC-3 complex composed of HPS1 and HPS4 which promote the exchange of bound GDP for free GTP. Regulated by the GTPase activating protein (GAP) SGSM2/RUTBC1 which increases the GTP hydrolysis activity. Inhibited by GDP dissociation inhibitors (GDIs) which prevent Rab-GDP dissociation. The small GTPases Rab are key regulators of intracellular membrane trafficking, from the formation of transport vesicles to their fusion with membranes. Rabs cycle between an inactive GDP-bound form and an active GTP-bound form that is able to recruit to membranes different set of downstream effectors directly responsible for vesicle formation, movement, tethering and fusion. Also acts as an A-kinase anchoring protein by binding to the type II regulatory subunit of protein kinase A and anchoring it to the mitochondrion. Also involved in synchronization of mitochondrial fission. Plays a role in the maturation of phagosomes that engulf pathogens, such as S.aureus and M.tuberculosis. Plays an important role in the control of melanin production and melanosome biogenesis. In concert with RAB38, regulates the proper trafficking of melanogenic enzymes TYR, TYRP1 and DCT/TYRP2 to melanosomes in melanocytes. Stimulates phosphorylation of RAB10 'Thr-73' by LRRK2. The protein is Ras-related protein Rab-32 of Homo sapiens (Human).